The primary structure comprises 132 residues: Global transcriptional regulator Spx (132 aa).

C10 and C13 are joined by a disulfide.

The protein belongs to the ArsC family. Spx subfamily. Interacts with the C-terminal domain of the alpha subunit of the RNAP.

The protein localises to the cytoplasm. Its function is as follows. Global transcriptional regulator that plays a key role in stress response and exerts either positive or negative regulation of genes. Acts by interacting with the C-terminal domain of the alpha subunit of the RNA polymerase (RNAP). This interaction can enhance binding of RNAP to the promoter region of target genes and stimulate their transcription, or block interaction of RNAP with activator. This Enterococcus faecalis (strain ATCC 700802 / V583) protein is Global transcriptional regulator Spx.